We begin with the raw amino-acid sequence, 311 residues long: Ribosomal protein L11 methyltransferase (311 aa).

Positions 160, 181, 203, and 246 each coordinate S-adenosyl-L-methionine.

Belongs to the methyltransferase superfamily. PrmA family.

Its subcellular location is the cytoplasm. The enzyme catalyses L-lysyl-[protein] + 3 S-adenosyl-L-methionine = N(6),N(6),N(6)-trimethyl-L-lysyl-[protein] + 3 S-adenosyl-L-homocysteine + 3 H(+). In terms of biological role, methylates ribosomal protein L11. The protein is Ribosomal protein L11 methyltransferase of Macrococcus caseolyticus (strain JCSC5402) (Macrococcoides caseolyticum).